The primary structure comprises 422 residues: UDP-N-acetylglucosamine 1-carboxyvinyltransferase (422 aa).

Residue 22–23 (KN) coordinates phosphoenolpyruvate. Residue Arg-93 coordinates UDP-N-acetyl-alpha-D-glucosamine. Cys-117 functions as the Proton donor in the catalytic mechanism. Position 117 is a 2-(S-cysteinyl)pyruvic acid O-phosphothioketal (Cys-117). UDP-N-acetyl-alpha-D-glucosamine is bound by residues 122–126 (RPVDL), 162–165 (KVSV), Asp-307, and Ile-329.

The protein belongs to the EPSP synthase family. MurA subfamily.

It is found in the cytoplasm. The catalysed reaction is phosphoenolpyruvate + UDP-N-acetyl-alpha-D-glucosamine = UDP-N-acetyl-3-O-(1-carboxyvinyl)-alpha-D-glucosamine + phosphate. Its pathway is cell wall biogenesis; peptidoglycan biosynthesis. Cell wall formation. Adds enolpyruvyl to UDP-N-acetylglucosamine. In Hamiltonella defensa subsp. Acyrthosiphon pisum (strain 5AT), this protein is UDP-N-acetylglucosamine 1-carboxyvinyltransferase.